A 418-amino-acid polypeptide reads, in one-letter code: Tyrosine--tRNA ligase (418 aa).

Residue Tyr-38 participates in L-tyrosine binding. Residues 43–52 (CTARSLHIGS) carry the 'HIGH' region motif. The L-tyrosine site is built by Tyr-175 and Gln-179. The short motif at 235-239 (KMGKT) is the 'KMSKS' region element. ATP is bound at residue Lys-238. The S4 RNA-binding domain maps to 348–413 (LSVVKLLQVS…CGKKRHLKVV (66 aa)).

Belongs to the class-I aminoacyl-tRNA synthetase family. TyrS type 1 subfamily. Homodimer.

It localises to the cytoplasm. It carries out the reaction tRNA(Tyr) + L-tyrosine + ATP = L-tyrosyl-tRNA(Tyr) + AMP + diphosphate + H(+). Functionally, catalyzes the attachment of tyrosine to tRNA(Tyr) in a two-step reaction: tyrosine is first activated by ATP to form Tyr-AMP and then transferred to the acceptor end of tRNA(Tyr). This Ehrlichia ruminantium (strain Welgevonden) protein is Tyrosine--tRNA ligase.